The primary structure comprises 396 residues: Cathepsin E (396 aa).

An N-terminal signal peptide occupies residues 1-19; it reads MKTLPLLLLLLLDLGQAQG. Residues 20–53 constitute a propeptide, activation peptide; sequence TLDRVPLRRQPSLRKKLRAQGQLSEFWKAHKVDM. Residues 78–392 form the Peptidase A1 domain; that stretch reads YFGTISIGSP…DRGSNRVGLA (315 aa). Asn90 is a glycosylation site (N-linked (GlcNAc...) asparagine). Asp96 is an active-site residue. Cystine bridges form between Cys109–Cys114 and Cys272–Cys276. The active site involves Asp281. Cys314 and Cys351 form a disulfide bridge.

It belongs to the peptidase A1 family. Homodimer; disulfide-linked. Glycosylated. The nature of the carbohydrate chain varies between cell types.

The protein localises to the endosome. It catalyses the reaction Similar to cathepsin D, but slightly broader specificity.. Its function is as follows. May have a role in immune function. Probably involved in the processing of antigenic peptides during MHC class II-mediated antigen presentation. May play a role in activation-induced lymphocyte depletion in the thymus, and in neuronal degeneration and glial cell activation in the brain. This is Cathepsin E (CTSE) from Oryctolagus cuniculus (Rabbit).